Here is a 916-residue protein sequence, read N- to C-terminus: Oxoglutarate dehydrogenase (916 aa).

Belongs to the alpha-ketoglutarate dehydrogenase family. In terms of assembly, homodimer. Part of the 2-oxoglutarate dehydrogenase (OGDH) complex composed of E1 (2-oxoglutarate dehydrogenase), E2 (dihydrolipoamide succinyltransferase) and E3 (dihydrolipoamide dehydrogenase); the complex contains multiple copies of the three enzymatic components (E1, E2 and E3). Requires thiamine diphosphate as cofactor.

It catalyses the reaction N(6)-[(R)-lipoyl]-L-lysyl-[protein] + 2-oxoglutarate + H(+) = N(6)-[(R)-S(8)-succinyldihydrolipoyl]-L-lysyl-[protein] + CO2. E1 component of the 2-oxoglutarate dehydrogenase (OGDH) complex which catalyzes the decarboxylation of 2-oxoglutarate, the first step in the conversion of 2-oxoglutarate to succinyl-CoA and CO(2). This Buchnera aphidicola subsp. Baizongia pistaciae (strain Bp) protein is Oxoglutarate dehydrogenase (sucA).